A 132-amino-acid chain; its full sequence is MVMTDPVADFLTRIRNGNMVMHETVEVPGSRIKLSIARIMQEEGYIKDYEFVEDGKQGIIRIYLKYGPDKKKVITGIKRISKPGLRVYVKKDEIPRVLGGLGTAVISTSKGLMTDKNARKQGLGGEVICYIW.

The protein belongs to the universal ribosomal protein uS8 family. Part of the 30S ribosomal subunit. Contacts proteins S5 and S12.

In terms of biological role, one of the primary rRNA binding proteins, it binds directly to 16S rRNA central domain where it helps coordinate assembly of the platform of the 30S subunit. The protein is Small ribosomal subunit protein uS8 of Syntrophomonas wolfei subsp. wolfei (strain DSM 2245B / Goettingen).